The sequence spans 312 residues: Malate dehydrogenase (312 aa).

NAD(+)-binding positions include 7–13 (GAAGGIG) and D34. Residues R81 and R87 each contribute to the substrate site. NAD(+)-binding positions include N94 and 117-119 (ITN). Substrate is bound by residues N119 and R153. H177 serves as the catalytic Proton acceptor. M227 is an NAD(+) binding site.

The protein belongs to the LDH/MDH superfamily. MDH type 1 family. In terms of assembly, homodimer.

It carries out the reaction (S)-malate + NAD(+) = oxaloacetate + NADH + H(+). In terms of biological role, catalyzes the reversible oxidation of malate to oxaloacetate. In Escherichia fergusonii (strain ATCC 35469 / DSM 13698 / CCUG 18766 / IAM 14443 / JCM 21226 / LMG 7866 / NBRC 102419 / NCTC 12128 / CDC 0568-73), this protein is Malate dehydrogenase.